The following is an 853-amino-acid chain: Leucine--tRNA ligase (853 aa).

Positions 40–50 (PYPSGKMHMGH) match the 'HIGH' region motif. Positions 609–613 (KMSKS) match the 'KMSKS' region motif. Lys612 is an ATP binding site.

It belongs to the class-I aminoacyl-tRNA synthetase family.

It localises to the cytoplasm. The catalysed reaction is tRNA(Leu) + L-leucine + ATP = L-leucyl-tRNA(Leu) + AMP + diphosphate. This is Leucine--tRNA ligase from Brachyspira hyodysenteriae (strain ATCC 49526 / WA1).